The chain runs to 746 residues: Serine/threonine-protein kinase SMU1 (746 aa).

Disordered stretches follow at residues methionine 1–histidine 138 and glutamine 155–asparagine 212. Low complexity-rich tracts occupy residues serine 15–threonine 54 and serine 85–alanine 105. 3 stretches are compositionally biased toward polar residues: residues leucine 106–threonine 121, arginine 128–histidine 138, and arginine 156–threonine 176. The span at proline 194–aspartate 203 shows a compositional bias: basic and acidic residues. Residues isoleucine 237–glycine 250 enclose the CRIB domain. The tract at residues glycine 301 to lysine 451 is disordered. A compositionally biased stretch (polar residues) spans proline 370–aspartate 380. Positions serine 414–serine 430 are enriched in low complexity. The region spanning tyrosine 472–leucine 723 is the Protein kinase domain. ATP is bound by residues isoleucine 478–valine 486 and lysine 501. The active-site Proton acceptor is the aspartate 591.

Belongs to the protein kinase superfamily. STE Ser/Thr protein kinase family. STE20 subfamily.

Its subcellular location is the cytoplasm. The protein localises to the nucleus. The catalysed reaction is L-seryl-[protein] + ATP = O-phospho-L-seryl-[protein] + ADP + H(+). It catalyses the reaction L-threonyl-[protein] + ATP = O-phospho-L-threonyl-[protein] + ADP + H(+). MAP4K component of the MAPK pathway required for the mating pheromone response and the regulation of cell polarity and cell cycle. Phosphorylates histone H2B to form H2BS10ph. The protein is Serine/threonine-protein kinase SMU1 (SMU1) of Mycosarcoma maydis (Corn smut fungus).